Consider the following 152-residue polypeptide: Small ribosomal subunit protein uS15 (152 aa).

Belongs to the universal ribosomal protein uS15 family. In terms of assembly, part of the 30S ribosomal subunit.

The sequence is that of Small ribosomal subunit protein uS15 from Methanocorpusculum labreanum (strain ATCC 43576 / DSM 4855 / Z).